A 725-amino-acid polypeptide reads, in one-letter code: A-agglutinin anchorage subunit (725 aa).

The signal sequence occupies residues 1–24 (MTLSFAHFTYLFTILLGLTNIALA). 19 consecutive repeat copies span residues 53 to 149 (VSTS…EVGT), 182 to 188 (TTTSLSS), 189 to 195 (TSTSPSS), 196 to 202 (TSTSPSS), 203 to 209 (TSTSSSS), 210 to 216 (TSTSSSS), 217 to 223 (TSTSSSS), 224 to 230 (TSTSPSS), 231 to 237 (TSTSSSL), 238 to 244 (TSTSSSS), 245 to 251 (TSTSQSS), 252 to 258 (TSTSSSS), 259 to 265 (TSTSPSS), 266 to 272 (TSTSSSS), 273 to 279 (TSTSPSS), 280 to 286 (KSTSASS), 287 to 293 (TSTSSYS), 294 to 300 (TSTSPSL), and 301 to 307 (TSSSPTL). A 2 X approximate repeats region spans residues 53 to 493 (VSTSTIVQAG…TSHSYSSVQT (441 aa)). Disordered regions lie at residues 168–318 (PVTS…TSIS) and 335–363 (SSTS…TPSM). An 18 X approximate tandem repeats, Ser/Thr-rich region spans residues 182-307 (TTTSLSSTST…PSLTSSSPTL (126 aa)). One copy of the 1-2 repeat lies at 395-493 (MSTYFTTVSG…TSHSYSSVQT (99 aa)). The GPI-anchor amidated glycine moiety is linked to residue Gly699. A propeptide spans 700-725 (SGSQTRLPLGKLVFAIMAVACNVIFS) (removed in mature form).

In terms of assembly, heterodimer; disulfide-linked. Post-translationally, extensively O-glycosylated by PMT1 and PMT2. In terms of processing, the GPI-anchor is attached to the protein in the endoplasmic reticulum and serves to target the protein to the cell surface. There, the glucosamine-inositol phospholipid moiety is cleaved off and the GPI-modified mannoprotein is covalently attached via its lipidless GPI glycan remnant to the 1,6-beta-glucan of the outer cell wall layer.

The protein localises to the secreted. It localises to the cell wall. It is found in the membrane. In terms of biological role, cell wall anchoring subunit of the a-agglutinin heterodimer. S.cerevisiae a and alpha cells express the complementary cell surface glycoproteins a-agglutinin and alpha-agglutinin, respectively, which interact with one another to promote cellular aggregation during mating. The sequence is that of A-agglutinin anchorage subunit (AGA1) from Saccharomyces cerevisiae (strain ATCC 204508 / S288c) (Baker's yeast).